The sequence spans 172 residues: Urease accessory protein UreE (172 aa).

It belongs to the UreE family.

It localises to the cytoplasm. Functionally, involved in urease metallocenter assembly. Binds nickel. Probably functions as a nickel donor during metallocenter assembly. The polypeptide is Urease accessory protein UreE (Shewanella halifaxensis (strain HAW-EB4)).